A 114-amino-acid polypeptide reads, in one-letter code: Nascent polypeptide-associated complex protein (114 aa).

One can recognise an NAC-A/B domain in the interval 5–69; the sequence is PSQFKNLERM…AKEAQKEEPK (65 aa).

It belongs to the NAC-alpha family. In terms of assembly, homodimer. Interacts with the ribosome. Binds ribosomal RNA.

Contacts the emerging nascent chain on the ribosome. This is Nascent polypeptide-associated complex protein from Sulfurisphaera tokodaii (strain DSM 16993 / JCM 10545 / NBRC 100140 / 7) (Sulfolobus tokodaii).